Reading from the N-terminus, the 248-residue chain is Type II methyltransferase M.AquIA (248 aa).

Residues 3–248 enclose the SAM-dependent MTase C5-type domain; that stretch reads KKLISLFSGA…IKDRIKNHGY (246 aa). C82 is a catalytic residue.

It belongs to the class I-like SAM-binding methyltransferase superfamily. C5-methyltransferase family. As to quaternary structure, heterodimer of an alpha and a beta subunit.

It catalyses the reaction a 2'-deoxycytidine in DNA + S-adenosyl-L-methionine = a 5-methyl-2'-deoxycytidine in DNA + S-adenosyl-L-homocysteine + H(+). A methylase, recognizes the double-stranded sequence 5'-CYCGRG-3', methylates C-1 on both strands, and protects the DNA from cleavage by the AquI endonuclease. The sequence is that of Type II methyltransferase M.AquIA (aquIMA) from Picosynechococcus sp. (strain ATCC 27264 / PCC 7002 / PR-6) (Agmenellum quadruplicatum).